Reading from the N-terminus, the 297-residue chain is Acetaldehyde dehydrogenase (297 aa).

An NAD(+)-binding site is contributed by 15-18 (SGSI). The Acyl-thioester intermediate role is filled by Cys130. NAD(+) is bound by residues 162–170 (SAGIATREN) and Asn272.

Belongs to the acetaldehyde dehydrogenase family.

It carries out the reaction acetaldehyde + NAD(+) + CoA = acetyl-CoA + NADH + H(+). The sequence is that of Acetaldehyde dehydrogenase from Burkholderia pseudomallei (strain 1106a).